Here is a 381-residue protein sequence, read N- to C-terminus: Protein YkfC (381 aa).

The Reverse transcriptase domain maps to 72-337; sequence LRDELLSGHY…DGFIFLGHRL (266 aa). Residues D166, D284, and D285 each coordinate Mg(2+).

It belongs to the bacterial reverse transcriptase family.

The sequence is that of Protein YkfC (ykfC) from Escherichia coli (strain K12).